Reading from the N-terminus, the 235-residue chain is Leucyl/phenylalanyl-tRNA--protein transferase (235 aa).

It belongs to the L/F-transferase family.

The protein localises to the cytoplasm. It carries out the reaction N-terminal L-lysyl-[protein] + L-leucyl-tRNA(Leu) = N-terminal L-leucyl-L-lysyl-[protein] + tRNA(Leu) + H(+). The catalysed reaction is N-terminal L-arginyl-[protein] + L-leucyl-tRNA(Leu) = N-terminal L-leucyl-L-arginyl-[protein] + tRNA(Leu) + H(+). It catalyses the reaction L-phenylalanyl-tRNA(Phe) + an N-terminal L-alpha-aminoacyl-[protein] = an N-terminal L-phenylalanyl-L-alpha-aminoacyl-[protein] + tRNA(Phe). Functions in the N-end rule pathway of protein degradation where it conjugates Leu, Phe and, less efficiently, Met from aminoacyl-tRNAs to the N-termini of proteins containing an N-terminal arginine or lysine. This chain is Leucyl/phenylalanyl-tRNA--protein transferase, found in Azoarcus sp. (strain BH72).